A 205-amino-acid chain; its full sequence is Ypt/Rab-type GTPase avaA (205 aa).

Residues 17 to 23 (SGVGKTS), 33 to 40 (FSGSYKAT), glycine 66, 125 to 128 (NKID), and 157 to 159 (SAK) contribute to the GTP site. The Effector region signature appears at 37–45 (YKATIGADF). 2 S-geranylgeranyl cysteine lipidation sites follow: cysteine 203 and cysteine 205. A Cysteine methyl ester modification is found at cysteine 205.

The protein belongs to the small GTPase superfamily. Rab family.

With respect to regulation, rab activation is generally mediated by a guanine exchange factor (GEF), while inactivation through hydrolysis of bound GTP is catalyzed by a GTPase activating protein (GAP). Ypt/Rab-type GTPases are key regulators of membrane trafficking and intracellular vesicular transport. They act as molecular switches that convert between GTP-bound and GDP-bound states, and regulate virtually all steps of membrane traffic from the formation of the transport vesicle at the donor membrane to its fusion at the target membrane. In the GDP-bound state, Ypt proteins are predominantly cytosolic, solubilized through the interaction with a GDP dissociation inhibitor (GDI). In the GTP-bound state, the proteins are membrane bound and interact with specific effector proteins that select cargo, promote vesicle movement, or verify the correct site of fusion. AvaA functions in vacuolar biogenesis. The chain is Ypt/Rab-type GTPase avaA from Emericella nidulans (strain FGSC A4 / ATCC 38163 / CBS 112.46 / NRRL 194 / M139) (Aspergillus nidulans).